Consider the following 201-residue polypeptide: dITP/XTP pyrophosphatase (201 aa).

Position 9–14 (9–14 (TRNSGK)) interacts with substrate. Mg(2+)-binding residues include glutamate 42 and aspartate 71. The Proton acceptor role is filled by aspartate 71. Substrate-binding positions include serine 72, 156–159 (FGYD), lysine 178, and 183–184 (HR).

Belongs to the HAM1 NTPase family. As to quaternary structure, homodimer. The cofactor is Mg(2+).

It catalyses the reaction XTP + H2O = XMP + diphosphate + H(+). It carries out the reaction dITP + H2O = dIMP + diphosphate + H(+). The enzyme catalyses ITP + H2O = IMP + diphosphate + H(+). Its function is as follows. Pyrophosphatase that catalyzes the hydrolysis of nucleoside triphosphates to their monophosphate derivatives, with a high preference for the non-canonical purine nucleotides XTP (xanthosine triphosphate), dITP (deoxyinosine triphosphate) and ITP. Seems to function as a house-cleaning enzyme that removes non-canonical purine nucleotides from the nucleotide pool, thus preventing their incorporation into DNA/RNA and avoiding chromosomal lesions. The sequence is that of dITP/XTP pyrophosphatase (ynbD) from Lactococcus lactis subsp. lactis (strain IL1403) (Streptococcus lactis).